Reading from the N-terminus, the 141-residue chain is Pyrophosphate-energized proton pump (141 aa).

3 consecutive transmembrane segments (helical) span residues 11–31 (GLIA…TLTV), 46–66 (GTNL…IVVI), and 121–141 (LAGL…AGMI).

It belongs to the H(+)-translocating pyrophosphatase (TC 3.A.10) family. Homodimer. It depends on Mg(2+) as a cofactor.

The protein resides in the cell inner membrane. It catalyses the reaction diphosphate + H2O + H(+)(in) = 2 phosphate + 2 H(+)(out). Functionally, proton pump that utilizes the energy of pyrophosphate hydrolysis as the driving force for proton movement across the membrane. Generates a proton motive force. The polypeptide is Pyrophosphate-energized proton pump (hppA) (Anaplasma marginale).